Consider the following 913-residue polypeptide: Calcium-activated chloride channel regulator 1 (913 aa).

A signal peptide spans 1-21 (MGPFKSSVFILILHLLEGALS). Residues 46 to 199 (DETLIQQIKD…GITGKIEVNK (154 aa)) are metalloprotease domain. Residue His156 coordinates Zn(2+). The active site involves Glu157. Positions 160 and 167 each coordinate Zn(2+). The VWFA domain occupies 306–475 (IVCLVLDKSG…NGLIDAFGAL (170 aa)). N-linked (GlcNAc...) asparagine glycans are attached at residues Asn503, Asn769, Asn803, Asn809, Asn830, Asn835, Asn885, and Asn889. Residues 866–885 (PPQTPPETPSPDETSAPCPN) form a disordered region.

It belongs to the CLCR family. In terms of processing, glycosylated. The translation product is autoproteolytically cleaved by the metalloprotease domain in the endoplasmic reticulum into a N-terminal and a C-terminal products that remain physically associated with each other. The cleavage is necessary for calcium-activated chloride channel (CaCC) activation activity.

The protein localises to the secreted. It localises to the extracellular space. Its function is as follows. May be involved in mediating calcium-activated chloride conductance. May play critical roles in goblet cell metaplasia, mucus hypersecretion, cystic fibrosis and AHR. May be involved in the regulation of mucus production and/or secretion by goblet cells. Involved in the regulation of tissue inflammation in the innate immune response. May play a role as a tumor suppressor. Induces MUC5AC. The sequence is that of Calcium-activated chloride channel regulator 1 (CLCA1) from Macaca mulatta (Rhesus macaque).